A 69-amino-acid polypeptide reads, in one-letter code: MKAKEIRDLTTSEIEEQIKSSKEELFNLRFQLATGQLEETARIRTVRKTIARLKTVAREREIEQSKANQ.

The protein belongs to the universal ribosomal protein uL29 family.

The polypeptide is Large ribosomal subunit protein uL29 (Staphylococcus aureus (strain Mu3 / ATCC 700698)).